Reading from the N-terminus, the 195-residue chain is CASP-like protein 2C2 (195 aa).

Over 1–18 the chain is Cytoplasmic; it reads MAATTAAAAVPGVVRAER. A helical transmembrane segment spans residues 19 to 39; the sequence is LLRGGCVVMAATAALLLGFSA. Topologically, residues 40–57 are extracellular; the sequence is ETKTVLFVRKTAVAKDVQ. The chain crosses the membrane as a helical span at residues 58-78; that stretch reads ALWVLTVAAAAAAGYQFAQLV. The Cytoplasmic portion of the chain corresponds to 79-106; the sequence is RCMYCSSSGDAGAMAVAWTSFLLDKGCA. The chain crosses the membrane as a helical span at residues 107–127; that stretch reads YVVFASTAAALQACMVGLIGV. Topologically, residues 128-145 are extracellular; it reads EALQWSKLCNIYTRFCEQ. The helical transmembrane segment at 146-166 threads the bilayer; that stretch reads AAAGMLCSFLAAAGMAVLSAF. At 167–195 the chain is on the cytoplasmic side; it reads SARRLFRLYSPAGHRRSCPRAAVLATSPH.

It belongs to the Casparian strip membrane proteins (CASP) family. As to quaternary structure, homodimer and heterodimers.

The protein localises to the cell membrane. The sequence is that of CASP-like protein 2C2 from Oryza sativa subsp. japonica (Rice).